A 101-amino-acid polypeptide reads, in one-letter code: Small ribosomal subunit protein uS14 (101 aa).

It belongs to the universal ribosomal protein uS14 family. As to quaternary structure, part of the 30S ribosomal subunit. Contacts proteins S3 and S10.

In terms of biological role, binds 16S rRNA, required for the assembly of 30S particles and may also be responsible for determining the conformation of the 16S rRNA at the A site. The protein is Small ribosomal subunit protein uS14 of Paraburkholderia phymatum (strain DSM 17167 / CIP 108236 / LMG 21445 / STM815) (Burkholderia phymatum).